A 769-amino-acid chain; its full sequence is Serine protease HtrA-like (769 aa).

Residues 1-20 (MDIGKKHVIPKSQYRRKRRE) show a composition bias toward basic residues. The interval 1 to 390 (MDIGKKHVIP…ATSKLNKGRA (390 aa)) is disordered. Basic and acidic residues-rich tracts occupy residues 21 to 64 (FFHN…ERFK) and 71 to 108 (LEQR…DVSK). The span at 126–137 (YEQNSEATLSTK) shows a compositional bias: polar residues. The span at 138 to 186 (STDKVESTEMRKLSSDKNKVGHEEQHVLSKPSEHDKETRIDSESSRTDS) shows a compositional bias: basic and acidic residues. Polar residues predominate over residues 247-262 (QQSQNEQTKTYTYGDS). Composition is skewed to basic and acidic residues over residues 264–296 (QNDK…HIVD) and 310–330 (KTDD…HKQN). A compositionally biased stretch (polar residues) spans 331–347 (ADSSETVGYQSQSTASH). Positions 348–364 (RSTEKRNISINDHDKLN) are enriched in basic and acidic residues. The segment covering 365-390 (GQKTNTKTSANNNQKKATSKLNKGRA) has biased composition (polar residues). The chain crosses the membrane as a helical span at residues 410 to 430 (LVILMGIIILIVILNAIFNNV). Catalysis depends on charge relay system residues His-504, Asp-534, and Ser-619. A PDZ domain is found at 680-733 (IASLNSFERQAVKLPGKVKNGVVVDQVDNNGLADQSGLKKGDVITELDGKLLED).

The protein belongs to the peptidase S1C family.

The protein localises to the cell membrane. The protein is Serine protease HtrA-like of Staphylococcus aureus (strain USA300).